A 949-amino-acid chain; its full sequence is ATPase 1, plasma membrane-type (949 aa).

Ser2 is modified (N-acetylserine). At 2–61 (SGLEDIKNETVDLEKIPIEEVFQQLKCTREGLTTQEGEDRIVIFGPNKLEEKKESKILKF) the chain is on the cytoplasmic side. Residues 62–81 (LGFMWNPLSWVMEAAALMAI) form a helical membrane-spanning segment. Topologically, residues 82–93 (ALANGDNRPPDW) are extracellular. A helical transmembrane segment spans residues 94–114 (QDFVGIICLLVINSTISFIEE). Topologically, residues 115-243 (NNAGNAAAAL…GHFQKVLTSI (129 aa)) are cytoplasmic. Residues 244–264 (GNFCICSIAIGIAIEIVVMYP) traverse the membrane as a helical segment. At 265-273 (IQHRKYRDG) the chain is on the extracellular side. The helical transmembrane segment at 274-291 (IDNLLVLLIGGIPIAMPT) threads the bilayer. Topologically, residues 292–643 (VLSVTMAIGS…TSRAIFQRMK (352 aa)) are cytoplasmic. Asp329 acts as the 4-aspartylphosphate intermediate in catalysis. Asp588 and Asp592 together coordinate Mg(2+). A helical transmembrane segment spans residues 644–665 (NYTIYAVSITIRIVFGFMLIAL). The Extracellular portion of the chain corresponds to 666 to 670 (IWEFD). The helical transmembrane segment at 671-693 (FSAFMVLIIAILNDGTIMTISKD) threads the bilayer. Residues 694-709 (RVKPSPTPDSWKLKEI) are Cytoplasmic-facing. Residues 710-730 (FATGIVLGGYQAIMSVIFFWA) form a helical membrane-spanning segment. Over 731-751 (AHKTDFFSDKFGVRSIRDNND) the chain is Extracellular. Residues 752 to 772 (ELMGAVYLQVSIISQALIFVT) form a helical membrane-spanning segment. Over 773–784 (RSRSWSFVERPG) the chain is Cytoplasmic. Residues 785–805 (ALLMIAFVIAQLVATLIAVYA) traverse the membrane as a helical segment. Residues 806–813 (DWTFAKVK) lie on the Extracellular side of the membrane. A helical transmembrane segment spans residues 814–834 (GIGWGWAGVIWIYSIVTYFPQ). Topologically, residues 835–949 (DILKFAIRYI…IDTAGHHYTV (115 aa)) are cytoplasmic. The residue at position 881 (Thr881) is a Phosphothreonine. A phosphoserine mark is found at Ser899 and Ser931. Residues 947–949 (YTV) form an interaction with 14-3-3 proteins region. Thr948 bears the Phosphothreonine mark.

It belongs to the cation transport ATPase (P-type) (TC 3.A.3) family. Type IIIA subfamily. Binds to 14-3-3 proteins. The binding is induced by phosphorylation of Thr-948. Binding to 14-3-3 proteins activates the H(+)-ATPase. Interacts with PPI1; this interaction promotes ATPase activity. Interacts with PSY1R. Part of a functional complex containing PSKR1, BAK1, CNGC17, and AHA. Interacts with CNGC17 and PSKR1. Triggered by SAUR9 via the phosphorylation of the C-terminal autoinhibitory domain. Interacts with AHA2. Binds to CBC1 and CBC2. Post-translationally, phosphorylated, probably by PHOT1 and PHOT2, at C-terminal Thr-948 in guard cells in response to blue light to induce stomatal opening. In terms of tissue distribution, expressed in guard cells, mesophyll cells, leaves and roots.

It localises to the cell membrane. The catalysed reaction is ATP + H2O + H(+)(in) = ADP + phosphate + 2 H(+)(out). Its activity is regulated as follows. Phosphorylation on Thr residues is repressed by tyrphostin 9, sphingosine, GW5074 and BML-265. By contrast, the fungal phytotoxin fusicoccin (FC) promotes phosphorylation of Thr-948 independently to BHP, thus leading to large stomatal opening. In terms of biological role, the plasma membrane H(+) ATPase of plants and fungi generates a proton gradient that drives the active transport of nutrients by H(+)-symport. The resulting external acidification and/or internal alkinization may mediate growth responses. Forms a functional cation-translocating unit with CNGC17 that is activated by PSKR1/BAK1 and possibly other BAK1/RLK complexes. Promotes stomatal opening in response to blue light. The chain is ATPase 1, plasma membrane-type from Arabidopsis thaliana (Mouse-ear cress).